The sequence spans 91 residues: Kazal-type trypsin inhibitor (91 aa).

Positions 1–22 (MRHIGVFVGVLALALVLLVVEA) are cleaved as a signal peptide. Residues 25–78 (DAERGVCACPRIYMPVCGSNLKTYNNDCLLRCEINSDLGRANNLRKIADQACDN) enclose the Kazal-like domain. Cystine bridges form between C31/C56, C33/C52, and C41/C76. N78 carries N-linked (GlcNAc...) asparagine glycosylation.

In terms of assembly, interacts with human PLG (plasmin). Female salivary gland. Female gut at 3 and 24 hours after blood feeding. Female carcass. Male tissues. Not detected in ovary and fat body at 3 and 24 hours after blood feeding.

It is found in the secreted. Anticoagulant protein that decreases host thrombin (F2) activity via an uncompetitive inhibition mechanism. Inhibits amidolytic activity of host plasmin (PLG). Inhibits amidolytic activity of host trypsin. Inhibits trypsin-like endogenous activity from gut of female mosquitoes 24 hours after feeding and weakly affects enzyme activity from gut 3 hours after feeding, suggesting a possible role as an inhibitor of endogenous proteases. Its function is as follows. (Microbial infection) Limits host plasmin-mediated enhancement of dengue virus type 2 infection in mosquito midgut. The chain is Kazal-type trypsin inhibitor from Aedes aegypti (Yellowfever mosquito).